The primary structure comprises 229 residues: MKQLINNDWWPVLKPQFETANYQQLHNFLVDEYGHQQVYPEMHHIFEAFNWTPFSKVKVVILGQDPYHGPGQAHGCSFSVLPGVAVPPSLQNIYKELQADLGCPPVKHGYLRSWAEQGVLLLNSVLTVRAGQAYSHQGHGWEQLTDAAIVALSKRPTPVVFILWGRAARDKKRLIDLKRNFVVESAHPSPLSAYRGFFGSRPFSKTNQFLEMTGQAPINWQLPSTVDHL.

The Proton acceptor role is filled by Asp65.

The protein belongs to the uracil-DNA glycosylase (UDG) superfamily. UNG family.

The protein localises to the cytoplasm. The enzyme catalyses Hydrolyzes single-stranded DNA or mismatched double-stranded DNA and polynucleotides, releasing free uracil.. Functionally, excises uracil residues from the DNA which can arise as a result of misincorporation of dUMP residues by DNA polymerase or due to deamination of cytosine. This Limosilactobacillus fermentum (strain NBRC 3956 / LMG 18251) (Lactobacillus fermentum) protein is Uracil-DNA glycosylase.